The primary structure comprises 1272 residues: Myosin-3 (1272 aa).

The segment at 1–20 (MAVIKKGARRKDVKEPKKRS) is disordered. Residues 36–715 (VGISDLTLLS…SLFALEDMRD (680 aa)) form the Myosin motor domain. 129–136 (GESGAGKT) contributes to the ATP binding site. Residue Ser-357 is modified to Phosphoserine. Positions 588-610 (ANELVETLSKAEPSYIRTIKPNQ) are actin-binding. 2 consecutive IQ domains span residues 719 to 739 (YNMA…RIDA) and 740 to 765 (AIKI…YGTK). In terms of domain architecture, TH1 spans 771-961 (KERRSMSLLG…TIYVRRGHPA (191 aa)). Disordered regions lie at residues 951–1015 (STIY…QKPV), 1029–1141 (YNPK…SELP), and 1217–1272 (VQFG…DDDW). The span at 980-1000 (IKSKKSKHKSTHKHTHSHRSH) shows a compositional bias: basic residues. A compositionally biased stretch (low complexity) spans 1066 to 1078 (KKASSSHKSSSAK). Residues 1089-1098 (GVEKNKEPLK) show a composition bias toward basic and acidic residues. Residues 1109 to 1118 (PIPPPPPPMG) show a composition bias toward pro residues. The SH3 domain maps to 1120–1182 (PKDPKFEAAY…PTAYMTPYKD (63 aa)). The span at 1217 to 1236 (VQFGSATVGPTSDNQSNPVG) shows a compositional bias: polar residues. A compositionally biased stretch (acidic residues) spans 1258-1272 (ADDDDNDDGDDDDDW).

It belongs to the TRAFAC class myosin-kinesin ATPase superfamily. Myosin family. In terms of assembly, interacts (via myosin motor domain) with SHE4; this interaction is important for proper localization and may regulate the interaction of the motor domain with actin. Interacts (via SH3 domain) with VRP1; this interaction is required for localization to sites of polarized growth and may regulate the interaction of the tail domain with actin. Interacts (via SH3 domain) with PAN1; this interaction is important for late stages of endocytopsis. Interacts (via SH3 domain) with BBC1 and LAS17. Interacts (via C-terminal acidic tail) with ARC19 and ARC40; ARC19 and ARC40 are Arp2/3 complex subunits. In terms of processing, phosphorylation of the TEDS site (Ser-357) is required for the polarization of the actin cytoskeleton and for ligand-induced, but not for constitutive internalization of STE2. Phosphorylation probably activates the myosin-I ATPase. Ser-357 is phosphorylated by CLA4 and STE20 in vitro.

It localises to the cytoplasm. The protein resides in the cytoskeleton. Its subcellular location is the actin patch. Functionally, one of two redundant type-I myosins implicated in the organization of the actin cytoskeleton. Required for proper actin cytoskeleton polarization and for the internalization step in endocytosis. At the cell cortex, assembles in patch-like structures together with proteins from the actin-polymerizing machinery and promotes actin assembly. Functions redundantly with LAS17 as actin nucleation-promoting factor (NPF) for the Arp2/3 complex. Motor domain phosphorylation by PAK kinases CLA4 and STE20 promotes CDC42-regulated actin assembly. Functions together with the NPF PAN1 in late stages of endocytosis. Motor domain phosphorylation by PDK1 kinases PKH1 and PKH2, and by SGK kinases YPK1 and YPK2, promotes ligand-induced, but not constitutive endocytosis of the G protein-coupled receptor STE2. This is Myosin-3 (MYO3) from Saccharomyces cerevisiae (strain ATCC 204508 / S288c) (Baker's yeast).